We begin with the raw amino-acid sequence, 276 residues long: uncharacterized protein (276 aa).

This is an uncharacterized protein from Methanocaldococcus jannaschii (strain ATCC 43067 / DSM 2661 / JAL-1 / JCM 10045 / NBRC 100440) (Methanococcus jannaschii).